The chain runs to 933 residues: Phosphoenolpyruvate carboxylase (933 aa).

Residues histidine 158 and lysine 592 contribute to the active site.

It belongs to the PEPCase type 1 family. It depends on Mg(2+) as a cofactor.

The catalysed reaction is oxaloacetate + phosphate = phosphoenolpyruvate + hydrogencarbonate. Its function is as follows. Forms oxaloacetate, a four-carbon dicarboxylic acid source for the tricarboxylic acid cycle. This Nitrosomonas europaea (strain ATCC 19718 / CIP 103999 / KCTC 2705 / NBRC 14298) protein is Phosphoenolpyruvate carboxylase.